The following is a 118-amino-acid chain: Large ribosomal subunit protein bL20 (118 aa).

The protein belongs to the bacterial ribosomal protein bL20 family.

Binds directly to 23S ribosomal RNA and is necessary for the in vitro assembly process of the 50S ribosomal subunit. It is not involved in the protein synthesizing functions of that subunit. In Elusimicrobium minutum (strain Pei191), this protein is Large ribosomal subunit protein bL20.